Here is a 315-residue protein sequence, read N- to C-terminus: Methionyl-tRNA formyltransferase (315 aa).

S113 to P116 is a (6S)-5,6,7,8-tetrahydrofolate binding site.

The protein belongs to the Fmt family.

It catalyses the reaction L-methionyl-tRNA(fMet) + (6R)-10-formyltetrahydrofolate = N-formyl-L-methionyl-tRNA(fMet) + (6S)-5,6,7,8-tetrahydrofolate + H(+). In terms of biological role, attaches a formyl group to the free amino group of methionyl-tRNA(fMet). The formyl group appears to play a dual role in the initiator identity of N-formylmethionyl-tRNA by promoting its recognition by IF2 and preventing the misappropriation of this tRNA by the elongation apparatus. In Pseudoalteromonas atlantica (strain T6c / ATCC BAA-1087), this protein is Methionyl-tRNA formyltransferase.